Consider the following 253-residue polypeptide: Imidazole glycerol phosphate synthase subunit HisF (253 aa).

Residues Asp11 and Asp130 contribute to the active site.

This sequence belongs to the HisA/HisF family. As to quaternary structure, heterodimer of HisH and HisF.

The protein localises to the cytoplasm. The catalysed reaction is 5-[(5-phospho-1-deoxy-D-ribulos-1-ylimino)methylamino]-1-(5-phospho-beta-D-ribosyl)imidazole-4-carboxamide + L-glutamine = D-erythro-1-(imidazol-4-yl)glycerol 3-phosphate + 5-amino-1-(5-phospho-beta-D-ribosyl)imidazole-4-carboxamide + L-glutamate + H(+). Its pathway is amino-acid biosynthesis; L-histidine biosynthesis; L-histidine from 5-phospho-alpha-D-ribose 1-diphosphate: step 5/9. IGPS catalyzes the conversion of PRFAR and glutamine to IGP, AICAR and glutamate. The HisF subunit catalyzes the cyclization activity that produces IGP and AICAR from PRFAR using the ammonia provided by the HisH subunit. The chain is Imidazole glycerol phosphate synthase subunit HisF from Ruminiclostridium cellulolyticum (strain ATCC 35319 / DSM 5812 / JCM 6584 / H10) (Clostridium cellulolyticum).